We begin with the raw amino-acid sequence, 113 residues long: Ig heavy chain V region 36-60 (113 aa).

This is Ig heavy chain V region 36-60 from Mus musculus (Mouse).